We begin with the raw amino-acid sequence, 328 residues long: Tetraacyldisaccharide 4'-kinase (328 aa).

55 to 62 (TAGGNGKT) is an ATP binding site.

It belongs to the LpxK family.

It catalyses the reaction a lipid A disaccharide + ATP = a lipid IVA + ADP + H(+). Its pathway is glycolipid biosynthesis; lipid IV(A) biosynthesis; lipid IV(A) from (3R)-3-hydroxytetradecanoyl-[acyl-carrier-protein] and UDP-N-acetyl-alpha-D-glucosamine: step 6/6. Functionally, transfers the gamma-phosphate of ATP to the 4'-position of a tetraacyldisaccharide 1-phosphate intermediate (termed DS-1-P) to form tetraacyldisaccharide 1,4'-bis-phosphate (lipid IVA). The protein is Tetraacyldisaccharide 4'-kinase of Yersinia pseudotuberculosis serotype I (strain IP32953).